The following is a 524-amino-acid chain: Bifunctional purine biosynthesis protein PurH (524 aa).

The MGS-like domain maps to Met-1–Val-145.

This sequence belongs to the PurH family.

It carries out the reaction (6R)-10-formyltetrahydrofolate + 5-amino-1-(5-phospho-beta-D-ribosyl)imidazole-4-carboxamide = 5-formamido-1-(5-phospho-D-ribosyl)imidazole-4-carboxamide + (6S)-5,6,7,8-tetrahydrofolate. The enzyme catalyses IMP + H2O = 5-formamido-1-(5-phospho-D-ribosyl)imidazole-4-carboxamide. Its pathway is purine metabolism; IMP biosynthesis via de novo pathway; 5-formamido-1-(5-phospho-D-ribosyl)imidazole-4-carboxamide from 5-amino-1-(5-phospho-D-ribosyl)imidazole-4-carboxamide (10-formyl THF route): step 1/1. The protein operates within purine metabolism; IMP biosynthesis via de novo pathway; IMP from 5-formamido-1-(5-phospho-D-ribosyl)imidazole-4-carboxamide: step 1/1. This is Bifunctional purine biosynthesis protein PurH from Ralstonia nicotianae (strain ATCC BAA-1114 / GMI1000) (Ralstonia solanacearum).